Consider the following 899-residue polypeptide: Protein argonaute (899 aa).

A disordered region spans residues 107 to 129; the sequence is TQKPKRRGGRAGGMRGNRGGPST. Positions 116 to 125 are enriched in gly residues; it reads RAGGMRGNRG. Residues 229–313 form the PAZ domain; it reads SMCELLNENR…KQDDYCNSVL (85 aa). In terms of domain architecture, Piwi spans 555–878; it reads LVVVVIPGPK…LSKFCGEILG (324 aa).

The protein belongs to the argonaute family. Ago subfamily. As to quaternary structure, interacts with miR2. Highly specific binding to the mRNA m7G-cap. May be a component of the RNA-induced silencing complex (RISC), a sequence-specific, multicomponent nuclease that destroys or silences messenger RNAs homologous to the silencing trigger.

It is found in the cytoplasm. Functionally, plays an essential role in growth and, with Dicer, also involved in microRNA (miRNA)-mediated translational repression. The RNA interference pathway is implicated in antigenic variation having a role in regulation of variant-specific surface protein (VSP)-coding gene expression. Several VSP genes are transcribed but only transcripts encoding the VSP to be expressed accumulate. Antisense RNAs corresponding to the silenced VSP genes are detected. In Giardia intestinalis (strain ATCC 50581 / GS clone H7) (Giardia lamblia), this protein is Protein argonaute.